We begin with the raw amino-acid sequence, 357 residues long: uncharacterized protein (357 aa).

The PNPLA domain occupies 27–196 (LVCEGGGQRG…SDAIPVKEAA (170 aa)). A GXGXXG motif is present at residues 31–36 (GGGQRG). Residues 59 to 63 (GTSAG) carry the GXSXG motif. The active-site Nucleophile is Ser-61. Asp-183 functions as the Proton acceptor in the catalytic mechanism. Positions 183-185 (DGG) match the DGA/G motif.

Its function is as follows. Probable lipid hydrolase. This is an uncharacterized protein from Escherichia coli (strain K12).